Consider the following 60-residue polypeptide: Single-pass membrane and coiled-coil domain-containing protein 4 homolog (60 aa).

The disordered stretch occupies residues 1–23 (MRKLRGGQTKETRKQRQERKEEN). The segment covering 8–23 (QTKETRKQRQERKEEN) has biased composition (basic and acidic residues). Positions 8–33 (QTKETRKQRQERKEENLKIQQQMKTI) form a coiled coil. Residues 31-51 (KTIVLPTIGVIFLCIVVYVFL) form a helical membrane-spanning segment.

Belongs to the SMCO4 family.

Its subcellular location is the membrane. This Anopheles gambiae (African malaria mosquito) protein is Single-pass membrane and coiled-coil domain-containing protein 4 homolog.